Consider the following 365-residue polypeptide: tRNA N6-adenosine threonylcarbamoyltransferase (365 aa).

Residues H119 and H123 each contribute to the Fe cation site. Residues 141 to 145 (LVSGG), D174, G187, and N288 each bind substrate. Residue D316 coordinates Fe cation.

Belongs to the KAE1 / TsaD family. Requires Fe(2+) as cofactor.

It localises to the cytoplasm. It catalyses the reaction L-threonylcarbamoyladenylate + adenosine(37) in tRNA = N(6)-L-threonylcarbamoyladenosine(37) in tRNA + AMP + H(+). Functionally, required for the formation of a threonylcarbamoyl group on adenosine at position 37 (t(6)A37) in tRNAs that read codons beginning with adenine. Is involved in the transfer of the threonylcarbamoyl moiety of threonylcarbamoyl-AMP (TC-AMP) to the N6 group of A37, together with TsaE and TsaB. TsaD likely plays a direct catalytic role in this reaction. The sequence is that of tRNA N6-adenosine threonylcarbamoyltransferase from Rhizobium johnstonii (strain DSM 114642 / LMG 32736 / 3841) (Rhizobium leguminosarum bv. viciae).